The primary structure comprises 270 residues: 3-phenylpropionate-dihydrodiol/cinnamic acid-dihydrodiol dehydrogenase (270 aa).

10–34 is a binding site for NAD(+); the sequence is FITGGGSGLGLALVERFIEEGAQVA. Substrate is bound at residue serine 143. The Proton acceptor role is filled by tyrosine 156.

The protein belongs to the short-chain dehydrogenases/reductases (SDR) family.

It catalyses the reaction 3-(cis-5,6-dihydroxycyclohexa-1,3-dien-1-yl)propanoate + NAD(+) = 3-(2,3-dihydroxyphenyl)propanoate + NADH + H(+). It carries out the reaction (2E)-3-(cis-5,6-dihydroxycyclohexa-1,3-dien-1-yl)prop-2-enoate + NAD(+) = (2E)-3-(2,3-dihydroxyphenyl)prop-2-enoate + NADH + H(+). The protein operates within aromatic compound metabolism; 3-phenylpropanoate degradation. In terms of biological role, converts 3-phenylpropionate-dihydrodiol (PP-dihydrodiol) and cinnamic acid-dihydrodiol (CI-dihydrodiol) into 3-(2,3-dihydroxylphenyl)propanoic acid (DHPP) and 2,3-dihydroxicinnamic acid (DHCI), respectively. This Escherichia coli O8 (strain IAI1) protein is 3-phenylpropionate-dihydrodiol/cinnamic acid-dihydrodiol dehydrogenase.